The chain runs to 1779 residues: Collagen alpha-1(IV) chain (1779 aa).

The N-terminal stretch at 1-23 (MLPFWKRLLYAAVIAGALVGADA) is a signal peptide. N-linked (GlcNAc...) asparagine glycosylation is present at Asn-72. Disordered regions lie at residues 89–643 (GNRG…KPAL), 655–1187 (DKGY…LPGL), 1200–1285 (TGAP…IGPR), and 1336–1530 (GLPG…RGYE). A compositionally biased stretch (low complexity) spans 144–163 (QAGVPGVQGPAGNPGAPGIN). Composition is skewed to basic and acidic residues over residues 196–217 (KGEK…KGEP) and 249–259 (PRGEHGLKGEK). Residues 360–369 (PGLNGLPGNP) show a composition bias toward low complexity. Over residues 434-443 (GQKGGAGLPG) the composition is skewed to gly residues. The segment covering 531-545 (GRPGTPGAAGAPGQK) has biased composition (low complexity). The span at 724–747 (PGFHGRDGAKGDKGSFGRSGEKGE) shows a compositional bias: basic and acidic residues. Low complexity-rich tracts occupy residues 913–931 (VGPI…PGID) and 1015–1036 (PGLM…QGLD). A compositionally biased stretch (basic and acidic residues) spans 1106–1127 (EKGDQGRSGIDGRDGINGEKGE). The span at 1151–1170 (APGMDGLPGAAGAPGAVGYP) shows a compositional bias: low complexity. 3 stretches are compositionally biased toward basic and acidic residues: residues 1224–1245 (IRGD…EQGE), 1496–1505 (ERGEKGERGL), and 1517–1529 (PKGD…ERGY). The Collagen IV NC1 domain occupies 1555–1778 (GILITRHSQS…SRCQVCMKNS (224 aa)). Cystine bridges form between Cys-1570/Cys-1659, Cys-1603/Cys-1656, Cys-1615/Cys-1621, Cys-1678/Cys-1774, Cys-1712/Cys-1771, and Cys-1724/Cys-1731.

It belongs to the type IV collagen family. In terms of assembly, trimers of two alpha 1(IV) and one alpha 2(IV) chain. Type IV collagen forms a mesh-like network linked through intermolecular interactions between 7S domains and between NC1 domains. Post-translationally, prolines at the third position of the tripeptide repeating unit (G-X-Y) are hydroxylated in some or all of the chains. In terms of processing, type IV collagens contain numerous cysteine residues which are involved in inter- and intramolecular disulfide bonding. 12 of these, located in the NC1 domain, are conserved in all known type IV collagens.

It localises to the secreted. It is found in the extracellular space. The protein resides in the extracellular matrix. Its subcellular location is the basement membrane. Its function is as follows. Collagen type IV is specific for basement membranes. The protein is Collagen alpha-1(IV) chain of Drosophila melanogaster (Fruit fly).